The primary structure comprises 448 residues: Chromosomal replication initiator protein DnaA (448 aa).

Positions 1-72 (MPDLQELWNY…VEGAYEFAEI (72 aa)) are domain I, interacts with DnaA modulators. The interval 72–110 (IELTPIFVLPGESDNLTPLEPEEEHVLTKAETPTFLRET) is domain II. Residues 111 to 327 (HLNSKYTFDT…GALVRVQAYA (217 aa)) are domain III, AAA+ region. Positions 155, 157, 158, and 159 each coordinate ATP. Residues 328–448 (TMQNAEITTS…ILDLKNTMKS (121 aa)) form a domain IV, binds dsDNA region.

Belongs to the DnaA family. As to quaternary structure, oligomerizes as a right-handed, spiral filament on DNA at oriC.

Its subcellular location is the cytoplasm. Plays an essential role in the initiation and regulation of chromosomal replication. ATP-DnaA binds to the origin of replication (oriC) to initiate formation of the DNA replication initiation complex once per cell cycle. Binds the DnaA box (a 9 base pair repeat at the origin) and separates the double-stranded (ds)DNA. Forms a right-handed helical filament on oriC DNA; dsDNA binds to the exterior of the filament while single-stranded (ss)DNA is stabiized in the filament's interior. The ATP-DnaA-oriC complex binds and stabilizes one strand of the AT-rich DNA unwinding element (DUE), permitting loading of DNA polymerase. After initiation quickly degrades to an ADP-DnaA complex that is not apt for DNA replication. Binds acidic phospholipids. This Latilactobacillus sakei subsp. sakei (strain 23K) (Lactobacillus sakei subsp. sakei) protein is Chromosomal replication initiator protein DnaA.